A 122-amino-acid polypeptide reads, in one-letter code: Phospholipase A2 homolog ECS_00014 (122 aa).

Disulfide bonds link Cys-26-Cys-115, Cys-28-Cys-44, Cys-43-Cys-95, Cys-49-Cys-122, Cys-50-Cys-88, Cys-57-Cys-81, and Cys-75-Cys-86. Residues 105 to 117 (KKYTYYPNFWCKG) are important for membrane-damaging activities in eukaryotes and bacteria; heparin-binding.

It belongs to the phospholipase A2 family. Group II subfamily. S49 sub-subfamily. Monomer. In terms of tissue distribution, expressed by the venom gland.

The protein resides in the secreted. In terms of biological role, snake venom phospholipase A2 homolog that lacks enzymatic activity. Shows high myotoxin activities and displays edema-inducing activities. Has cytotoxic activities against HUVEC cells (LC(50)=12.2 uL) and human lung adenocarcinoma A549 cells (LC(50)=8.5 uL). In Echis carinatus sochureki (Saw-scaled viper), this protein is Phospholipase A2 homolog ECS_00014.